The following is a 146-amino-acid chain: 3-hydroxyacyl-[acyl-carrier-protein] dehydratase FabZ (146 aa).

Histidine 51 is an active-site residue.

The protein belongs to the thioester dehydratase family. FabZ subfamily.

Its subcellular location is the cytoplasm. The enzyme catalyses a (3R)-hydroxyacyl-[ACP] = a (2E)-enoyl-[ACP] + H2O. Functionally, involved in unsaturated fatty acids biosynthesis. Catalyzes the dehydration of short chain beta-hydroxyacyl-ACPs and long chain saturated and unsaturated beta-hydroxyacyl-ACPs. The sequence is that of 3-hydroxyacyl-[acyl-carrier-protein] dehydratase FabZ from Staphylococcus aureus (strain Mu3 / ATCC 700698).